We begin with the raw amino-acid sequence, 501 residues long: Phenylalanine--tRNA ligase alpha subunit (501 aa).

L-phenylalanine contacts are provided by threonine 340 and phenylalanine 423. Glutamate 425 contributes to the Mg(2+) binding site. L-phenylalanine is bound at residue phenylalanine 448.

The protein belongs to the class-II aminoacyl-tRNA synthetase family. Phe-tRNA synthetase alpha subunit type 2 subfamily. As to quaternary structure, tetramer of two alpha and two beta subunits. The cofactor is Mg(2+).

The protein localises to the cytoplasm. The catalysed reaction is tRNA(Phe) + L-phenylalanine + ATP = L-phenylalanyl-tRNA(Phe) + AMP + diphosphate + H(+). The sequence is that of Phenylalanine--tRNA ligase alpha subunit from Methanococcus maripaludis (strain C7 / ATCC BAA-1331).